The sequence spans 294 residues: 4-diphosphocytidyl-2-C-methyl-D-erythritol kinase (294 aa).

K23 is an active-site residue. An ATP-binding site is contributed by 106 to 116 (PMGGGLGGGSS). The active site involves D148.

The protein belongs to the GHMP kinase family. IspE subfamily.

The catalysed reaction is 4-CDP-2-C-methyl-D-erythritol + ATP = 4-CDP-2-C-methyl-D-erythritol 2-phosphate + ADP + H(+). Its pathway is isoprenoid biosynthesis; isopentenyl diphosphate biosynthesis via DXP pathway; isopentenyl diphosphate from 1-deoxy-D-xylulose 5-phosphate: step 3/6. Its function is as follows. Catalyzes the phosphorylation of the position 2 hydroxy group of 4-diphosphocytidyl-2C-methyl-D-erythritol. This Nitrosospira multiformis (strain ATCC 25196 / NCIMB 11849 / C 71) protein is 4-diphosphocytidyl-2-C-methyl-D-erythritol kinase.